The sequence spans 476 residues: Nodulation protein NoeA (476 aa).

Its function is as follows. Not known; does not seem to participate in nod factor synthesis but required for nodulation on some specific Medicago species such as M.littoralis. This is Nodulation protein NoeA (noeA) from Rhizobium meliloti (strain 1021) (Ensifer meliloti).